Here is a 257-residue protein sequence, read N- to C-terminus: Receptor expression-enhancing protein 4 (257 aa).

The next 2 membrane-spanning stretches (helical) occupy residues 1–21 (MVSW…CPAY) and 42–62 (WIVF…ISWF). Residues Ser152 and Ser194 each carry the phosphoserine modification. The segment at 178 to 257 (PHQRPPIGYR…KKTVPSDMDS (80 aa)) is disordered. A Phosphothreonine modification is found at Thr196. Ser202 bears the Phosphoserine mark. Position 250 is a phosphothreonine (Thr250). Ser253 is modified (phosphoserine).

The protein belongs to the DP1 family.

It is found in the endoplasmic reticulum membrane. Its function is as follows. Microtubule-binding protein required to ensure proper cell division and nuclear envelope reassembly by sequestering the endoplasmic reticulum away from chromosomes during mitosis. Probably acts by clearing the endoplasmic reticulum membrane from metaphase chromosomes. The chain is Receptor expression-enhancing protein 4 (REEP4) from Pongo abelii (Sumatran orangutan).